A 472-amino-acid polypeptide reads, in one-letter code: Protein nucleotidyltransferase YdiU (472 aa).

Residues glycine 86, glycine 88, arginine 89, lysine 109, aspartate 121, glycine 122, arginine 172, and arginine 179 each contribute to the ATP site. Aspartate 244 acts as the Proton acceptor in catalysis. Positions 245 and 254 each coordinate Mg(2+). An ATP-binding site is contributed by aspartate 254.

It belongs to the SELO family. The cofactor is Mg(2+). Mn(2+) serves as cofactor.

The enzyme catalyses L-seryl-[protein] + ATP = 3-O-(5'-adenylyl)-L-seryl-[protein] + diphosphate. The catalysed reaction is L-threonyl-[protein] + ATP = 3-O-(5'-adenylyl)-L-threonyl-[protein] + diphosphate. It carries out the reaction L-tyrosyl-[protein] + ATP = O-(5'-adenylyl)-L-tyrosyl-[protein] + diphosphate. It catalyses the reaction L-histidyl-[protein] + UTP = N(tele)-(5'-uridylyl)-L-histidyl-[protein] + diphosphate. The enzyme catalyses L-seryl-[protein] + UTP = O-(5'-uridylyl)-L-seryl-[protein] + diphosphate. The catalysed reaction is L-tyrosyl-[protein] + UTP = O-(5'-uridylyl)-L-tyrosyl-[protein] + diphosphate. In terms of biological role, nucleotidyltransferase involved in the post-translational modification of proteins. It can catalyze the addition of adenosine monophosphate (AMP) or uridine monophosphate (UMP) to a protein, resulting in modifications known as AMPylation and UMPylation. The sequence is that of Protein nucleotidyltransferase YdiU from Ruegeria sp. (strain TM1040) (Silicibacter sp.).